We begin with the raw amino-acid sequence, 888 residues long: Phosphoenolpyruvate carboxylase (888 aa).

Catalysis depends on residues histidine 144 and lysine 553.

It belongs to the PEPCase type 1 family. The cofactor is Mg(2+).

It carries out the reaction oxaloacetate + phosphate = phosphoenolpyruvate + hydrogencarbonate. Its function is as follows. Forms oxaloacetate, a four-carbon dicarboxylic acid source for the tricarboxylic acid cycle. This is Phosphoenolpyruvate carboxylase from Alcanivorax borkumensis (strain ATCC 700651 / DSM 11573 / NCIMB 13689 / SK2).